A 986-amino-acid chain; its full sequence is Ephrin type-B receptor 2 (986 aa).

A signal peptide spans 1–18 (MAVRRLGAALLLLPLLAA). The Extracellular portion of the chain corresponds to 19 to 543 (VEETLMDSTT…QTSIKEKLPL (525 aa)). In terms of domain architecture, Eph LBD spans 20 to 202 (EETLMDSTTA…FYRKCPRIIQ (183 aa)). 2 disulfides stabilise this stretch: Cys62–Cys184 and Cys97–Cys107. N-linked (GlcNAc...) asparagine glycosylation is found at Asn265, Asn336, Asn428, and Asn482. 2 consecutive Fibronectin type-III domains span residues 324 to 434 (IPSA…TNQA) and 435 to 530 (APSA…TMTE). The helical transmembrane segment at 544–564 (IVGSSAAGLVFLIAVVVIAIV) threads the bilayer. The Cytoplasmic portion of the chain corresponds to 565 to 986 (CNRRGFERAD…QMNQIQSVEV (422 aa)). The Protein kinase domain maps to 621-884 (VKIEQVIGAG…QIVNTLDKMI (264 aa)). ATP is bound by residues 627–635 (IGAGEFGEV) and Lys653. Asp746 (proton acceptor) is an active-site residue. Lys891 participates in a covalent cross-link: Glycyl lysine isopeptide (Lys-Gly) (interchain with G-Cter in ubiquitin). Positions 913–977 (TSFNTVDEWL…LNSIQVMRAQ (65 aa)) constitute an SAM domain. The PDZ-binding motif lies at 984–986 (VEV).

This sequence belongs to the protein kinase superfamily. Tyr protein kinase family. Ephrin receptor subfamily. In terms of assembly, heterotetramer upon binding of the ligand. The heterotetramer is composed of an ephrin dimer and a receptor dimer. Interacts (via PDZ-binding motif) with GRIP1 and PICK1 (via PDZ domain). Interacts with ARHGEF15; mediates ARHGEF15 phosphorylation, ubiquitination and degradation by the proteasome. Interacts with AQP1; involved in endolymph production in the inner ear. Interacts with EFNA5. Interacts with SPSB1. Interacts with SPSB4. Interacts with SH2D3C. Post-translationally, autophosphorylated; ligand binding stimulates autophosphorylation on tyrosine residues. Ligand binding induces cleavage by matrix metalloproteinases (MMPs) such as MMP7/MMP9, producing an EphB2/N-terminal fragment (NTF) and a C-terminal long fragment (EphB2-LF). EphB2-LF is further cleaved by MMPs, producing EphB2/CTF1 which is further cleaved by the PS1/gamma-secretase producing EphB2/CTF2. In terms of processing, polyubiquitinated; ligand binding stimulates ubiquitination. Ubiquitinated by RNF186 at Lys-891, mainly through 'Lys-27'-linked polyubiquitin chains. Ubiquitinated by CRL2(KLHDC2) E3 ligase complex. In terms of tissue distribution, expressed in the epithelial dark cells of the inner ear. Expressed in the region of the proximal tubules of the kidney nephron. Expressed in myogenic progenitor cells.

The protein resides in the cell membrane. The protein localises to the cell projection. It localises to the axon. Its subcellular location is the dendrite. The catalysed reaction is L-tyrosyl-[protein] + ATP = O-phospho-L-tyrosyl-[protein] + ADP + H(+). Its function is as follows. Receptor tyrosine kinase which binds promiscuously transmembrane ephrin-B family ligands residing on adjacent cells, leading to contact-dependent bidirectional signaling into neighboring cells. The signaling pathway downstream of the receptor is referred to as forward signaling while the signaling pathway downstream of the ephrin ligand is referred to as reverse signaling. Functions in axon guidance during development. Involved in the guidance of commissural axons, that form a major interhemispheric connection between the 2 temporal lobes of the cerebral cortex. Also involved in guidance of contralateral inner ear efferent growth cones at the midline and of retinal ganglion cell axons to the optic disk. In addition to axon guidance, also regulates dendritic spines development and maturation and stimulates the formation of excitatory synapses. Upon activation by EFNB1, abolishes the ARHGEF15-mediated negative regulation on excitatory synapse formation. Controls other aspects of development including angiogenesis, palate development and in inner ear development through regulation of endolymph production. Forward and reverse signaling through the EFNB2/EPHB2 complex regulate movement and adhesion of cells that tubularize the urethra and septate the cloaca. May function as a tumor suppressor. May be involved in the regulation of platelet activation and blood coagulation. The polypeptide is Ephrin type-B receptor 2 (Mus musculus (Mouse)).